A 257-amino-acid polypeptide reads, in one-letter code: MARKFNSLAFIASPAEEAQKAAEDLRAVYGDHDPDKADVIVALGGDGFMLHTLHRTMNTGKLVYGMNRGSVGFLMNRYSTENLHQRIANADENAFHPLEMRTTDVNGDKFTALAINEVYLFRQSYQAAKLKVMVDGKTRLDELTCDGLLLATPAGSTAYNLSAHGPILPLEAPLLALTPVSPFRPRRWRGALLPNHVTVDIEILEADKRPVNAVADHQEVKSVVHVRIAESEKLTARILSDPDHSWSDRILAEQFSN.

D46 acts as the Proton acceptor in catalysis. NAD(+) is bound by residues 46-47 (DG), H51, 116-117 (NE), D146, A154, 157-162 (TAYNLS), and Q218.

Belongs to the NAD kinase family. It depends on a divalent metal cation as a cofactor.

The protein localises to the cytoplasm. It carries out the reaction NAD(+) + ATP = ADP + NADP(+) + H(+). Its function is as follows. Involved in the regulation of the intracellular balance of NAD and NADP, and is a key enzyme in the biosynthesis of NADP. Catalyzes specifically the phosphorylation on 2'-hydroxyl of the adenosine moiety of NAD to yield NADP. This is NAD kinase from Rhizobium meliloti (strain 1021) (Ensifer meliloti).